Here is an 840-residue protein sequence, read N- to C-terminus: Probable inorganic carbon transporter subunit DabA 2 (840 aa).

Residues Cys356, Asp358, His540, and Cys555 each contribute to the Zn(2+) site.

This sequence belongs to the inorganic carbon transporter (TC 9.A.2) DabA family. Forms a complex with DabB. Zn(2+) serves as cofactor.

It is found in the cell inner membrane. Part of an energy-coupled inorganic carbon pump. The chain is Probable inorganic carbon transporter subunit DabA 2 from Bradyrhizobium sp. (strain ORS 278).